A 194-amino-acid chain; its full sequence is Peptidyl-tRNA hydrolase (194 aa).

A tRNA-binding site is contributed by Y17. H22 (proton acceptor) is an active-site residue. Residues F69, N71, and N117 each contribute to the tRNA site.

Belongs to the PTH family. Monomer.

The protein resides in the cytoplasm. The catalysed reaction is an N-acyl-L-alpha-aminoacyl-tRNA + H2O = an N-acyl-L-amino acid + a tRNA + H(+). In terms of biological role, hydrolyzes ribosome-free peptidyl-tRNAs (with 1 or more amino acids incorporated), which drop off the ribosome during protein synthesis, or as a result of ribosome stalling. Functionally, catalyzes the release of premature peptidyl moieties from peptidyl-tRNA molecules trapped in stalled 50S ribosomal subunits, and thus maintains levels of free tRNAs and 50S ribosomes. The sequence is that of Peptidyl-tRNA hydrolase from Renibacterium salmoninarum (strain ATCC 33209 / DSM 20767 / JCM 11484 / NBRC 15589 / NCIMB 2235).